The sequence spans 325 residues: Hydroxymethylglutaryl-CoA lyase, mitochondrial (325 aa).

Residues 1-27 (MAAMTKALPRRLVGLASLRAVSTSSMD) constitute a mitochondrion transit peptide. A Pyruvate carboxyltransferase domain is found at 33–300 (VKIVEVGPRD…HTGVNLQKLL (268 aa)). R41 lines the substrate pocket. D42 provides a ligand contact to a divalent metal cation. An N6-acetyllysine; alternate modification is found at K48. At K48 the chain carries N6-succinyllysine; alternate. Position 111 is an N6-acetyllysine (K111). An N6-acetyllysine; alternate mark is found at K137 and K179. Residues K137 and K179 each carry the N6-succinyllysine; alternate modification. A divalent metal cation contacts are provided by H233 and H235. C266 is a catalytic residue. N275 contributes to the a divalent metal cation binding site. Residues 323–325 (CKL) carry the Microbody targeting signal motif. Position 324 is an N6-acetyllysine (K324).

Belongs to the HMG-CoA lyase family. As to quaternary structure, homodimer; disulfide-linked. Can also form homotetramers.

The protein resides in the mitochondrion matrix. It is found in the peroxisome. It catalyses the reaction (3S)-3-hydroxy-3-methylglutaryl-CoA = acetoacetate + acetyl-CoA. It functions in the pathway metabolic intermediate metabolism; (S)-3-hydroxy-3-methylglutaryl-CoA degradation; acetoacetate from (S)-3-hydroxy-3-methylglutaryl-CoA: step 1/1. In terms of biological role, mitochondrial 3-hydroxy-3-methylglutaryl-CoA lyase that catalyzes a cation-dependent cleavage of (S)-3-hydroxy-3-methylglutaryl-CoA into acetyl-CoA and acetoacetate, a key step in ketogenesis. Terminal step in leucine catabolism. Ketone bodies (beta-hydroxybutyrate, acetoacetate and acetone) are essential as an alternative source of energy to glucose, as lipid precursors and as regulators of metabolism. The chain is Hydroxymethylglutaryl-CoA lyase, mitochondrial (HMGCL) from Macaca fascicularis (Crab-eating macaque).